Here is a 796-residue protein sequence, read N- to C-terminus: Protein translocase subunit SecA 2 (796 aa).

Residues Gln84, 102–106, and Asp496 contribute to the ATP site; that span reads GEGKT.

Belongs to the SecA family. Monomer and homodimer. Part of the essential Sec protein translocation apparatus which comprises SecA, SecYEG and auxiliary proteins SecDF. Other proteins may also be involved.

The protein resides in the cell membrane. It localises to the cytoplasm. The enzyme catalyses ATP + H2O + cellular proteinSide 1 = ADP + phosphate + cellular proteinSide 2.. Its function is as follows. Part of the Sec protein translocase complex. Interacts with the SecYEG preprotein conducting channel. Has a central role in coupling the hydrolysis of ATP to the transfer of proteins into and across the cell membrane, serving as an ATP-driven molecular motor driving the stepwise translocation of polypeptide chains across the membrane. This chain is Protein translocase subunit SecA 2, found in Staphylococcus epidermidis (strain ATCC 35984 / DSM 28319 / BCRC 17069 / CCUG 31568 / BM 3577 / RP62A).